The primary structure comprises 428 residues: Light-independent protochlorophyllide reductase subunit N (428 aa).

[4Fe-4S] cluster-binding residues include cysteine 29, cysteine 54, and cysteine 115.

It belongs to the BchN/ChlN family. In terms of assembly, protochlorophyllide reductase is composed of three subunits; BchL, BchN and BchB. Forms a heterotetramer of two BchB and two BchN subunits. [4Fe-4S] cluster is required as a cofactor.

The catalysed reaction is chlorophyllide a + oxidized 2[4Fe-4S]-[ferredoxin] + 2 ADP + 2 phosphate = protochlorophyllide a + reduced 2[4Fe-4S]-[ferredoxin] + 2 ATP + 2 H2O. Its pathway is porphyrin-containing compound metabolism; bacteriochlorophyll biosynthesis (light-independent). Functionally, component of the dark-operative protochlorophyllide reductase (DPOR) that uses Mg-ATP and reduced ferredoxin to reduce ring D of protochlorophyllide (Pchlide) to form chlorophyllide a (Chlide). This reaction is light-independent. The NB-protein (BchN-BchB) is the catalytic component of the complex. The polypeptide is Light-independent protochlorophyllide reductase subunit N (Roseobacter denitrificans (strain ATCC 33942 / OCh 114) (Erythrobacter sp. (strain OCh 114))).